A 241-amino-acid chain; its full sequence is Probable 2-phosphosulfolactate phosphatase (241 aa).

It belongs to the ComB family. Mg(2+) serves as cofactor.

It carries out the reaction (2R)-O-phospho-3-sulfolactate + H2O = (2R)-3-sulfolactate + phosphate. The sequence is that of Probable 2-phosphosulfolactate phosphatase from Caldanaerobacter subterraneus subsp. tengcongensis (strain DSM 15242 / JCM 11007 / NBRC 100824 / MB4) (Thermoanaerobacter tengcongensis).